The sequence spans 230 residues: Urease accessory protein UreE (230 aa).

The segment at 197–230 (LHIHAIHSHGDGDSHNHDHDHSHSHGDHDHDHKH) is disordered. A compositionally biased stretch (basic and acidic residues) spans 204–230 (SHGDGDSHNHDHDHSHSHGDHDHDHKH).

The protein belongs to the UreE family.

The protein localises to the cytoplasm. Its function is as follows. Involved in urease metallocenter assembly. Binds nickel. Probably functions as a nickel donor during metallocenter assembly. This is Urease accessory protein UreE from Yersinia aldovae.